A 281-amino-acid chain; its full sequence is Leukocyte antigen CD37 (281 aa).

The Cytoplasmic segment spans residues 1 to 17 (MSAQESCLSLIKYFLFV). The chain crosses the membrane as a helical span at residues 18–38 (FNLFFFVLGGLIFCFGTWILI). Over 39–59 (DKTSFVSFVGLSFVPLQTWSK) the chain is Extracellular. A helical membrane pass occupies residues 60-74 (VLSVSGVLTMALALL). Topologically, residues 75–85 (GCVGALKELRC) are cytoplasmic. A helical membrane pass occupies residues 86–111 (LLGLYFGMLLLLFATQITLGILISTQ). At 112 to 241 (RVRLERRVQE…RSLQKWLHNN (130 aa)) the chain is on the extracellular side. N-linked (GlcNAc...) asparagine glycans are attached at residues Asn-170, Asn-183, and Asn-188. The chain crosses the membrane as a helical span at residues 242–266 (IISIVGICLGVGLLELGFMTLSIFL). Over 267–281 (CRNLDHVYDRLARYR) the chain is Cytoplasmic.

This sequence belongs to the tetraspanin (TM4SF) family. As to quaternary structure, interacts with SCIMP. Interacts with SOCS3. Interacts with DECTIN1/CLEC7A. Post-translationally, tyrosine phosphorylated; leading to activation of downstream signaling pathways. As to expression, B-lymphocytes.

The protein localises to the cell membrane. Functionally, structural component of specialized membrane microdomains known as tetraspanin-enriched microdomains (TERMs), which act as platforms for receptor clustering and signaling. Participates thereby in diverse biological functions such as cell signal transduction, adhesion, migration and protein trafficking. Upon ligand binding, two signaling pathways are activated, one acting through phosphorylation by LYN leading to cell death or a survival pathway with activation of GSK3B. Plays an essential role essential for clustering of integrin ITGA4/ITGB1 and promotes its mobility in the plasma membrane of B-cells. In turn, participates in ITGA4/ITGB1 integrin-mediated antiapoptotic signaling through AKT. Plays also a role in the migration of dendritic cells and neutrophils to draining lymph nodes, as well as in their integrin-mediated adhesion. Negatively regulates IL-6 responses through direct interaction with SOCS3 thereby preventing constitutive IL-6 signaling. Alternatively, inhibition of IL-6 signaling can also occur via interaction and stabilization of DECTIN1/CLEC7A at the cell membrane to inhibit its ability to promote the production of IL-6. In Rattus norvegicus (Rat), this protein is Leukocyte antigen CD37 (Cd37).